A 69-amino-acid polypeptide reads, in one-letter code: uncharacterized protein (69 aa).

The signal sequence occupies residues 1–16; the sequence is MKKIMLFLAMTSILSA. The N-palmitoyl cysteine moiety is linked to residue Cys-17. Cys-17 is lipidated: S-diacylglycerol cysteine.

It is found in the cell membrane. This is an uncharacterized protein from Bacillus subtilis (strain 168).